A 425-amino-acid chain; its full sequence is Potassium/proton antiporter CemA (425 aa).

A helical membrane pass occupies residues 89-109; it reads LFLTTVKCLFILLFVPLGINF. Positions 159 to 278 are insert; the sequence is LSENQIFFGL…KTDFASVFRT (120 aa). Residues 173 to 192 form a disordered region; sequence STFPSSEKSQKSEHFSNQDE. A compositionally biased stretch (basic and acidic residues) spans 180 to 192; it reads KSQKSEHFSNQDE. A run of 3 helical transmembrane segments spans residues 300–320, 350–370, and 386–406; these read IEAI…CYLL, ILFI…ELFF, and IFLL…YLIF.

It belongs to the CemA family.

The protein resides in the plastid. The protein localises to the chloroplast inner membrane. It catalyses the reaction K(+)(in) + H(+)(out) = K(+)(out) + H(+)(in). Functionally, contributes to K(+)/H(+) antiport activity by supporting proton efflux to control proton extrusion and homeostasis in chloroplasts in a light-dependent manner to modulate photosynthesis. Prevents excessive induction of non-photochemical quenching (NPQ) under continuous-light conditions. Indirectly promotes efficient inorganic carbon uptake into chloroplasts. This chain is Potassium/proton antiporter CemA, found in Tetradesmus obliquus (Green alga).